The chain runs to 445 residues: Glutamate--tRNA ligase 1 (445 aa).

The 'HIGH' region signature appears at 10–20 (PSPTGMLHVGN). The 'KMSKS' region signature appears at 240 to 244 (KISKR). Position 243 (K243) interacts with ATP.

It belongs to the class-I aminoacyl-tRNA synthetase family. Glutamate--tRNA ligase type 1 subfamily. In terms of assembly, monomer.

It is found in the cytoplasm. The catalysed reaction is tRNA(Glu) + L-glutamate + ATP = L-glutamyl-tRNA(Glu) + AMP + diphosphate. Functionally, catalyzes the attachment of glutamate to tRNA(Glu) in a two-step reaction: glutamate is first activated by ATP to form Glu-AMP and then transferred to the acceptor end of tRNA(Glu). The sequence is that of Glutamate--tRNA ligase 1 from Rickettsia bellii (strain OSU 85-389).